A 448-amino-acid polypeptide reads, in one-letter code: Phosphoglucosamine mutase (448 aa).

The Phosphoserine intermediate role is filled by S99. Mg(2+) contacts are provided by S99, D239, D241, and D243. The residue at position 99 (S99) is a Phosphoserine.

It belongs to the phosphohexose mutase family. Mg(2+) is required as a cofactor. In terms of processing, activated by phosphorylation.

The catalysed reaction is alpha-D-glucosamine 1-phosphate = D-glucosamine 6-phosphate. Its function is as follows. Catalyzes the conversion of glucosamine-6-phosphate to glucosamine-1-phosphate. The polypeptide is Phosphoglucosamine mutase (Lachnoclostridium phytofermentans (strain ATCC 700394 / DSM 18823 / ISDg) (Clostridium phytofermentans)).